A 547-amino-acid polypeptide reads, in one-letter code: Glucose-6-phosphate isomerase (547 aa).

Glu351 acts as the Proton donor in catalysis. Active-site residues include His382 and Lys509.

This sequence belongs to the GPI family.

The protein resides in the cytoplasm. The catalysed reaction is alpha-D-glucose 6-phosphate = beta-D-fructose 6-phosphate. It functions in the pathway carbohydrate biosynthesis; gluconeogenesis. Its pathway is carbohydrate degradation; glycolysis; D-glyceraldehyde 3-phosphate and glycerone phosphate from D-glucose: step 2/4. Its function is as follows. Catalyzes the reversible isomerization of glucose-6-phosphate to fructose-6-phosphate. This chain is Glucose-6-phosphate isomerase, found in Coxiella burnetii (strain RSA 493 / Nine Mile phase I).